Reading from the N-terminus, the 177-residue chain is Phycoerythrin beta subunit (177 aa).

Residues Y18, K28, N35, and D39 each coordinate (2R,3E)-phycocyanobilin. Positions 50, 54, and 61 each coordinate 15,16-dihydrobiliverdin. (2R,3E)-phycocyanobilin is bound by residues R77, C82, R84, and D85. Residues R129, Q148, and K149 each coordinate 15,16-dihydrobiliverdin. (2R,3E)-phycocyanobilin contacts are provided by P154, G156, and C158.

Belongs to the phycobiliprotein family. As to quaternary structure, heterotetramer of 2 identical alpha chains and 2 identical beta chains which form 2 alpha-beta heterodimers within the heterotetramer. The two alpha-beta heterodimers are rotated to an open configuration in contrast to the closed configuration found in other cryptophyte species due to the insertion of a single amino acid, 'Asp-65', in a conserved region of the alpha chain. In the open form, the central chromophores are not in physical contact but are separated by a water-filled channel. Post-translationally, contains three phycocyanobilin chromophores and one 15,16-dihydrobiliverdin chromophore with binding of the phycocyanobilin chromophores mediated by both the alpha and beta subunits.

The protein localises to the plastid. The protein resides in the chloroplast thylakoid membrane. Light-harvesting photosynthetic bile pigment-protein from the phycobiliprotein complex. This chain is Phycoerythrin beta subunit, found in Hemiselmis virescens.